Reading from the N-terminus, the 202-residue chain is Cold-regulated 413 plasma membrane protein 4 (202 aa).

Topologically, residues 1–42 (MGRGEFLAMKTEENAANLINSDMNEFVAAAKKLVKDVGMLGG) are extracellular. The helical transmembrane segment at 43 to 63 (VGFGTSVLQWAASIFAIYLLI) threads the bilayer. The Cytoplasmic segment spans residues 64 to 72 (LDRTNWKTK). Residues 73–93 (MLTTLLVPYIFFTLPSVIFQF) form a helical membrane-spanning segment. Over 94 to 97 (FSGD) the chain is Extracellular. The chain crosses the membrane as a helical span at residues 98 to 118 (FGKWIALIAIIVRLFFPKEFP). Residue Glu-119 is a topological domain, cytoplasmic. The helical transmembrane segment at 120-140 (WLEIPVALILIVVVSPSLIAW) threads the bilayer. The Extracellular segment spans residues 141 to 145 (TLRES). Residues 146–166 (WVGAVICLVIACYLFHEHIKA) traverse the membrane as a helical segment. Topologically, residues 167–181 (SGGFKNSFTQKNGIS) are cytoplasmic. Residues 182 to 202 (NTIGIVALLVYPVWTIFFHIF) traverse the membrane as a helical segment.

Belongs to the Cold-regulated 413 protein family.

The protein resides in the cell membrane. This chain is Cold-regulated 413 plasma membrane protein 4, found in Arabidopsis thaliana (Mouse-ear cress).